The chain runs to 191 residues: MPPRTLADNFLVPGPTAIAELIVFLLILFIFGKYIVPFVNQKLAERQELIRSQFEEAKRARDEAEAAAAEYRAQLQEIRAEATRVRERAHEEGQQIIAEMKEQARREADRIVRAAEEQIQAERARAVAAVRAEVGSLAVELASRIVGESLADVERQHRIVERFLAELEERAQRQPAASDVVGGQQREEVHR.

A helical transmembrane segment spans residues 10–30 (FLVPGPTAIAELIVFLLILFI). Residues 170–191 (RAQRQPAASDVVGGQQREEVHR) are disordered.

Belongs to the ATPase B chain family. F-type ATPases have 2 components, F(1) - the catalytic core - and F(0) - the membrane proton channel. F(1) has five subunits: alpha(3), beta(3), gamma(1), delta(1), epsilon(1). F(0) has three main subunits: a(1), b(2) and c(10-14). The alpha and beta chains form an alternating ring which encloses part of the gamma chain. F(1) is attached to F(0) by a central stalk formed by the gamma and epsilon chains, while a peripheral stalk is formed by the delta and b chains.

It is found in the cell membrane. In terms of biological role, f(1)F(0) ATP synthase produces ATP from ADP in the presence of a proton or sodium gradient. F-type ATPases consist of two structural domains, F(1) containing the extramembraneous catalytic core and F(0) containing the membrane proton channel, linked together by a central stalk and a peripheral stalk. During catalysis, ATP synthesis in the catalytic domain of F(1) is coupled via a rotary mechanism of the central stalk subunits to proton translocation. Functionally, component of the F(0) channel, it forms part of the peripheral stalk, linking F(1) to F(0). This chain is ATP synthase subunit b, found in Acidothermus cellulolyticus (strain ATCC 43068 / DSM 8971 / 11B).